Consider the following 419-residue polypeptide: S-adenosylmethionine synthase (419 aa).

Residue His15 coordinates ATP. Asp17 contacts Mg(2+). Glu43 contacts K(+). L-methionine contacts are provided by Glu56 and Gln100. The interval 100-110 (QSPDIAQGVDE) is flexible loop. Residues 171-173 (DGK), 248-249 (KF), Asp257, 263-264 (RK), Ala280, and Lys284 contribute to the ATP site. Asp257 is an L-methionine binding site. Lys288 lines the L-methionine pocket.

Belongs to the AdoMet synthase family. As to quaternary structure, homotetramer; dimer of dimers. The cofactor is Mg(2+). Requires K(+) as cofactor.

The protein localises to the cytoplasm. It catalyses the reaction L-methionine + ATP + H2O = S-adenosyl-L-methionine + phosphate + diphosphate. It participates in amino-acid biosynthesis; S-adenosyl-L-methionine biosynthesis; S-adenosyl-L-methionine from L-methionine: step 1/1. Functionally, catalyzes the formation of S-adenosylmethionine (AdoMet) from methionine and ATP. The overall synthetic reaction is composed of two sequential steps, AdoMet formation and the subsequent tripolyphosphate hydrolysis which occurs prior to release of AdoMet from the enzyme. The chain is S-adenosylmethionine synthase from Synechococcus sp. (strain WH7803).